The following is a 191-amino-acid chain: Large ribosomal subunit protein eL15 (191 aa).

It belongs to the eukaryotic ribosomal protein eL15 family.

In Pyrobaculum aerophilum (strain ATCC 51768 / DSM 7523 / JCM 9630 / CIP 104966 / NBRC 100827 / IM2), this protein is Large ribosomal subunit protein eL15 (rpl15e).